Here is a 385-residue protein sequence, read N- to C-terminus: Aryl-alcohol dehydrogenase [NADP(+)] (385 aa).

Y76 serves as the catalytic Proton donor. Residue 238-248 coordinates NADP(+); sequence NVLCAGKIRTD.

The protein belongs to the aldo/keto reductase family. Aldo/keto reductase 2 subfamily. The N-terminus is blocked.

The catalysed reaction is an aromatic primary alcohol + NADP(+) = an aromatic aldehyde + NADPH + H(+). This Phanerodontia chrysosporium (White-rot fungus) protein is Aryl-alcohol dehydrogenase [NADP(+)].